We begin with the raw amino-acid sequence, 407 residues long: Extracellular superoxide dismutase [Cu-Zn] 3 (407 aa).

The first 19 residues, 1-19 (MRLLSVLVFLISVISIAKA), serve as a signal peptide directing secretion. The Extracellular portion of the chain corresponds to 20-386 (DYQYAFCKFN…SESYNDNEPG (367 aa)). Residues asparagine 51, asparagine 205, and asparagine 224 are each glycosylated (N-linked (GlcNAc...) asparagine). The Cu cation site is built by histidine 245 and histidine 247. The N-linked (GlcNAc...) asparagine glycan is linked to asparagine 256. Histidine 263 is a binding site for Cu cation. Residues histidine 263, histidine 271, histidine 280, and aspartate 283 each coordinate Zn(2+). Residue histidine 320 coordinates Cu cation. N-linked (GlcNAc...) asparagine glycans are attached at residues asparagine 321 and asparagine 364. A helical membrane pass occupies residues 387–406 (SSSTVIPFFALIIFSIIFAL). Leucine 407 is a topological domain (cytoplasmic).

Belongs to the Cu-Zn superoxide dismutase family. It depends on Cu cation as a cofactor. Requires Zn(2+) as cofactor.

Its subcellular location is the cell membrane. The catalysed reaction is 2 superoxide + 2 H(+) = H2O2 + O2. Its function is as follows. Protect the extracellular space from toxic effect of reactive oxygen intermediates by converting superoxyde radicals into hydrogen peroxyde and oxygen. In Dictyostelium discoideum (Social amoeba), this protein is Extracellular superoxide dismutase [Cu-Zn] 3 (sodC).